The sequence spans 350 residues: Outer membrane protein A (350 aa).

An N-terminal signal peptide occupies residues 1–21; the sequence is MKKTAIAIAVALAGFATVAQA. Transmembrane regions (beta stranded) follow at residues 27–37, 59–70, 74–82, 100–111, 116–124, 146–155, 160–167, and 186–194; these read TWYAGGKLGWS, QLGAGAFGGYQV, LGFEMGYDW, QAVQLTAKLGYP, LDIYTRLGG, PVFAGGVEWA, IATRLEYQ, and MLSVGVSYR. Tandem repeats lie at residues 205-206, 207-208, 209-210, and 211-212. The 4 X 2 AA tandem repeats of A-P stretch occupies residues 205–212; that stretch reads APAPAPAP. In terms of domain architecture, OmpA-like spans 214-342; it reads VTTKTFTLKS…RVAIEVKGYK (129 aa). Cys-315 and Cys-327 are disulfide-bonded.

It belongs to the outer membrane OOP (TC 1.B.6) superfamily. OmpA family. In terms of assembly, monomer and homodimer.

The protein localises to the cell outer membrane. In terms of biological role, with TolR probably plays a role in maintaining the position of the peptidoglycan cell wall in the periplasm. Acts as a porin with low permeability that allows slow penetration of small solutes; an internal gate slows down solute passage. Required for conjugation with F-type plasmids; probably serves as the mating receptor on recipient cells. The protein is Outer membrane protein A of Klebsiella aerogenes (Enterobacter aerogenes).